A 503-amino-acid chain; its full sequence is Probable cytosol aminopeptidase (503 aa).

Residues Lys-274 and Asp-279 each contribute to the Mn(2+) site. Residue Lys-286 is part of the active site. Mn(2+) is bound by residues Asp-297, Asp-356, and Glu-358. Arg-360 is an active-site residue.

Belongs to the peptidase M17 family. The cofactor is Mn(2+).

Its subcellular location is the cytoplasm. It catalyses the reaction Release of an N-terminal amino acid, Xaa-|-Yaa-, in which Xaa is preferably Leu, but may be other amino acids including Pro although not Arg or Lys, and Yaa may be Pro. Amino acid amides and methyl esters are also readily hydrolyzed, but rates on arylamides are exceedingly low.. The catalysed reaction is Release of an N-terminal amino acid, preferentially leucine, but not glutamic or aspartic acids.. Presumably involved in the processing and regular turnover of intracellular proteins. Catalyzes the removal of unsubstituted N-terminal amino acids from various peptides. The protein is Probable cytosol aminopeptidase of Burkholderia pseudomallei (strain 1710b).